Reading from the N-terminus, the 98-residue chain is NADH-ubiquinone oxidoreductase chain 4L (98 aa).

The next 3 helical transmembrane spans lie at 1-21 (MSLT…GLLM), 29-49 (SLLC…ITIL), and 61-81 (IILL…LVMV).

This sequence belongs to the complex I subunit 4L family. As to quaternary structure, core subunit of respiratory chain NADH dehydrogenase (Complex I) which is composed of 45 different subunits.

The protein resides in the mitochondrion inner membrane. The catalysed reaction is a ubiquinone + NADH + 5 H(+)(in) = a ubiquinol + NAD(+) + 4 H(+)(out). Its function is as follows. Core subunit of the mitochondrial membrane respiratory chain NADH dehydrogenase (Complex I) which catalyzes electron transfer from NADH through the respiratory chain, using ubiquinone as an electron acceptor. Part of the enzyme membrane arm which is embedded in the lipid bilayer and involved in proton translocation. This chain is NADH-ubiquinone oxidoreductase chain 4L (MT-ND4L), found in Artibeus jamaicensis (Jamaican fruit-eating bat).